A 254-amino-acid polypeptide reads, in one-letter code: 30 kDa major early protein (254 aa).

This Human cytomegalovirus (strain Eisenhardt) (HHV-5) protein is 30 kDa major early protein.